Reading from the N-terminus, the 321-residue chain is Beta-ketoacyl-[acyl-carrier-protein] synthase III (321 aa).

Residues Cys115 and His248 contribute to the active site. The interval 249 to 253 (QANIR) is ACP-binding. Asn278 is an active-site residue.

The protein belongs to the thiolase-like superfamily. FabH family. Homodimer.

Its subcellular location is the cytoplasm. It catalyses the reaction malonyl-[ACP] + acetyl-CoA + H(+) = 3-oxobutanoyl-[ACP] + CO2 + CoA. Its pathway is lipid metabolism; fatty acid biosynthesis. In terms of biological role, catalyzes the condensation reaction of fatty acid synthesis by the addition to an acyl acceptor of two carbons from malonyl-ACP. Catalyzes the first condensation reaction which initiates fatty acid synthesis and may therefore play a role in governing the total rate of fatty acid production. Possesses both acetoacetyl-ACP synthase and acetyl transacylase activities. Its substrate specificity determines the biosynthesis of branched-chain and/or straight-chain of fatty acids. This chain is Beta-ketoacyl-[acyl-carrier-protein] synthase III, found in Azoarcus sp. (strain BH72).